The sequence spans 719 residues: MKLKNPDKHQTLSSNAKVDKIATDSLKNETDIELKNMNNEDYLRMSEHESIDPFVSASTIQTGIGIAGKILGTLGVPFPGQIASLYSFILGELWPKGKSQWEIFMEHVEAIINRKISTYARNKALTDLKGLGDALAVYHESLESWVGNRNNTRARSVVKNQYIALELMFVQKLPSFAVSGEEVPLLPIYAQAANLHLLLLRDASIFEKNGGLSASEISTFYNRQVERTRDYSYHCVKWNNTGLNNLRATNGQSWVRYNQFRKDIELMVLDLVRVFPSYDTLVYPIKTTSQLTREVYTDAIGTVDPNQALRSTTWYNNNAPSFSAIEAAVIRSPHLLDFLEKVTIYSLLSRWSNTQYMNMWGGHRLESRPIGGALNTSTQGSTNTSINPVTLQFTSRDFYRTESWAGLNLFLTQPVNGVPRVDFHWKFPTLPIASDNFYYLGYAGVGTQLQDSENELPPETTGQPNYESYSHRLSHIGLISGSHVKALVYSWTHRSADRTNTIEPNSITQIPLVKAFNLSSGAAVVRGPGFTGGHILRRTKSGTFGHIRVNINPPFAQRYRVRMSYASTTDLQFHTSINGKAINQGNFSATMNRGEDLDYKTFRTVGFTTPFSFSDVQSTFTIGAWNFSSGNEVYIGRIEFVPVEVTYEAEYDFEKAQEKVTALFTSTNPRGLKTDVKDYHIDQVSNLVESLSDELYLDEKRELFEIVKYAKQIHIERNM.

The protein belongs to the delta endotoxin family.

Its function is as follows. Promotes colloidosmotic lysis by binding to the midgut epithelial cells of insects. The sequence is that of Pesticidal crystal protein Cry1Ic (cry1Ic) from Bacillus thuringiensis.